The sequence spans 797 residues: Striatin-3 (797 aa).

Met1 is modified (N-acetylmethionine). Gly residues-rich tracts occupy residues Met1–Gly13 and Gly23–Pro43. A disordered region spans residues Met1 to Pro60. The span at Pro44–Glu56 shows a compositional bias: low complexity. Residues Tyr71–Phe79 form a caveolin-binding region. A coiled-coil region spans residues Ala77–Lys136. Thr150 carries the post-translational modification Phosphothreonine. A calmodulin-binding region spans residues Gln166 to Leu183. Ser202, Ser214, and Ser229 each carry phosphoserine. Disordered stretches follow at residues Leu224–Met278 and Asp313–Ala338. Positions Pro230–Ser241 are enriched in basic and acidic residues. A compositionally biased stretch (acidic residues) spans Asn253–Met265. 2 positions are modified to phosphoserine: Ser257 and Ser335. WD repeat units follow at residues Ser478–Lys517, Ala531–Tyr570, Gly584–Cys623, Gln679–Ser718, Ala721–Glu760, and Lys767–Val797.

Belongs to the WD repeat striatin family. As to quaternary structure, tetramerizes. Part of the core of STRIPAK complexes composed of PP2A catalytic and scaffolding subunits, the striatins (PP2A regulatory subunits), the striatin-associated proteins MOB4, STRIP1 and STRIP2, PDCD10 and members of the STE20 kinases, such as STK24 and STK26. The STRIPAK complex can be extended by adapter proteins such as SLMAP:SIKE1 or CTTNBP2NL. Interacts with CDC42BPB.

It localises to the cytoplasm. The protein resides in the membrane. In terms of biological role, calmodulin-binding scaffolding protein which is the center of the striatin-interacting phosphatase and kinase (STRIPAK) complexes. STRIPAK complexes have critical roles in protein (de)phosphorylation and are regulators of multiple signaling pathways including Hippo, MAPK, nuclear receptor and cytoskeleton remodeling. Different types of STRIPAK complexes are involved in a variety of biological processes such as cell growth, differentiation, apoptosis, metabolism and immune regulation. The chain is Striatin-3 from Homo sapiens (Human).